A 175-amino-acid polypeptide reads, in one-letter code: NADH-ubiquinone oxidoreductase chain 6 (175 aa).

The next 5 helical transmembrane spans lie at 1-21 (MMMYIVFILSIIFVISFVGVS), 25-45 (SPIYGGLGLIVGGGVGCGVIL), 47-67 (FGGSFLGLMVFLIYLGGMLVV), 88-108 (VVLGAFVLGLVVEFLIVIYAL), and 149-169 (YGVWLVIVTGWSLFISVVIIM).

The protein belongs to the complex I subunit 6 family. Core subunit of respiratory chain NADH dehydrogenase (Complex I) which is composed of 45 different subunits.

The protein localises to the mitochondrion inner membrane. It catalyses the reaction a ubiquinone + NADH + 5 H(+)(in) = a ubiquinol + NAD(+) + 4 H(+)(out). Core subunit of the mitochondrial membrane respiratory chain NADH dehydrogenase (Complex I) which catalyzes electron transfer from NADH through the respiratory chain, using ubiquinone as an electron acceptor. Essential for the catalytic activity and assembly of complex I. This chain is NADH-ubiquinone oxidoreductase chain 6 (MT-ND6), found in Balaenoptera physalus (Fin whale).